The chain runs to 197 residues: MEARRLAILCSHLNPPGPNPTRDPTLRVSDCSSGSSGDGKVESSTLQNDCVFCKIIRGESPCLKLYEDDMCLCILDTNPLSHGHSLIIPKLHYPTLEETPPSVVAAMCSKVPLISNAIVKATGSDSFNLLVNNGAAAGQVIFHTHIHIIPRKERDCLWASESLRRHSLKLDKEASQLVSCVRRHLCSLPEEQLVQPS.

The segment at 14-43 (NPPGPNPTRDPTLRVSDCSSGSSGDGKVES) is disordered. In terms of domain architecture, HIT spans 51–158 (VFCKIIRGES…IPRKERDCLW (108 aa)). Positions 143–147 (HTHIH) match the Histidine triad motif motif. H145 functions as the Tele-AMP-histidine intermediate in the catalytic mechanism. Position 147 (H147) interacts with substrate.

Its subcellular location is the peroxisome. The enzyme catalyses adenosine 5'-phosphosulfate + H2O = sulfate + AMP + 2 H(+). In terms of biological role, possesses adenylylsulfatase activity in vitro. This chain is Adenylylsulfatase HINT3, found in Arabidopsis thaliana (Mouse-ear cress).